Consider the following 286-residue polypeptide: Probable syntaxin-7B (286 aa).

Residues 1–257 (MTDRQPLISK…YVYKSSYRKK (257 aa)) lie on the Cytoplasmic side of the membrane. A compositionally biased stretch (basic and acidic residues) spans 97–107 (LSTSNKKESSH). The interval 97–160 (LSTSNKKESS…TNNNNNNNNN (64 aa)) is disordered. Residues 114–160 (QQQQQQQNNGNSNNNGYNTRGGYNQQQQQQQQQYNDYTNNNNNNNNN) show a composition bias toward low complexity. The region spanning 185–247 (NRILDERNAN…EDAVVELEKA (63 aa)) is the t-SNARE coiled-coil homology domain. A helical; Anchor for type IV membrane protein membrane pass occupies residues 258–278 (MIIFVICLLVTLVAVGIFLAI). Residues 279 to 286 (YYGVIKKK) are Vesicular-facing.

Belongs to the syntaxin family.

It is found in the membrane. In Dictyostelium discoideum (Social amoeba), this protein is Probable syntaxin-7B (syn7B).